The following is a 185-amino-acid chain: Ribosome-recycling factor (185 aa).

Belongs to the RRF family.

The protein resides in the cytoplasm. Functionally, responsible for the release of ribosomes from messenger RNA at the termination of protein biosynthesis. May increase the efficiency of translation by recycling ribosomes from one round of translation to another. This Shewanella baltica (strain OS223) protein is Ribosome-recycling factor.